Here is a 273-residue protein sequence, read N- to C-terminus: Pantothenate synthetase (273 aa).

27 to 34 provides a ligand contact to ATP; that stretch reads MGALHEGH. Histidine 34 (proton donor) is an active-site residue. Glutamine 58 provides a ligand contact to (R)-pantoate. Glutamine 58 is a beta-alanine binding site. 144–147 contributes to the ATP binding site; that stretch reads GKKD. Glutamine 150 is a binding site for (R)-pantoate. ATP contacts are provided by residues valine 173 and 181 to 184; that span reads LSSR.

The protein belongs to the pantothenate synthetase family. Homodimer.

The protein localises to the cytoplasm. It catalyses the reaction (R)-pantoate + beta-alanine + ATP = (R)-pantothenate + AMP + diphosphate + H(+). It participates in cofactor biosynthesis; (R)-pantothenate biosynthesis; (R)-pantothenate from (R)-pantoate and beta-alanine: step 1/1. Functionally, catalyzes the condensation of pantoate with beta-alanine in an ATP-dependent reaction via a pantoyl-adenylate intermediate. In Sulfurimonas denitrificans (strain ATCC 33889 / DSM 1251) (Thiomicrospira denitrificans (strain ATCC 33889 / DSM 1251)), this protein is Pantothenate synthetase.